The sequence spans 247 residues: Coproheme decarboxylase (247 aa).

Fe-coproporphyrin III contacts are provided by residues Arg-129, 143-147, His-170, Gln-183, and Ser-221; that span reads YPMDK. Tyr-143 is an active-site residue.

This sequence belongs to the ChdC family. Type 1 subfamily. Fe-coproporphyrin III serves as cofactor.

The enzyme catalyses Fe-coproporphyrin III + 2 H2O2 + 2 H(+) = heme b + 2 CO2 + 4 H2O. It catalyses the reaction Fe-coproporphyrin III + H2O2 + H(+) = harderoheme III + CO2 + 2 H2O. The catalysed reaction is harderoheme III + H2O2 + H(+) = heme b + CO2 + 2 H2O. It functions in the pathway porphyrin-containing compound metabolism; protoheme biosynthesis. Its function is as follows. Involved in coproporphyrin-dependent heme b biosynthesis. Catalyzes the decarboxylation of Fe-coproporphyrin III (coproheme) to heme b (protoheme IX), the last step of the pathway. The reaction occurs in a stepwise manner with a three-propionate intermediate. This is Coproheme decarboxylase from Bacillus mycoides (strain KBAB4) (Bacillus weihenstephanensis).